The sequence spans 224 residues: MAQKEEAAAAAEPASQNGEEVENLEDPEKLKELIELPPFEIVTGERLPAHYFKFQFRNVEYSSGRNKTFLCYVVEAQSKGGQVQASRGYLEDEHATNHAEEAFFNSIMPTFDPALRYMVTWYVSSSPCAACADRIVKTLNKTKNLRLLILVGRLFMWEEPEIQAALRKLKEAGCRLRIMKPQDFEYIWQNFVEQEEGESKAFEPWEDIQENFLYYEEKLADILK.

Residues 1-25 (MAQKEEAAAAAEPASQNGEEVENLE) are disordered. Zn(2+) contacts are provided by Glu60 and His98. One can recognise a CMP/dCMP-type deaminase domain in the interval 64-169 (GRNKTFLCYV…PEIQAALRKL (106 aa)). The active-site Proton donor is Glu100. Positions 128 and 131 each coordinate Zn(2+).

This sequence belongs to the cytidine and deoxycytidylate deaminase family. In terms of assembly, homotetramer. Requires Zn(2+) as cofactor.

The catalysed reaction is cytidine(6666) in apoB mRNA + H2O + H(+) = uridine(6666) in apoB mRNA + NH4(+). Its function is as follows. Probable C to U editing enzyme whose physiological substrate is not yet known. Does not display detectable apoB mRNA editing. Has a low intrinsic cytidine deaminase activity. May play a role in the epigenetic regulation of gene expression through the process of active DNA demethylation. This Bos taurus (Bovine) protein is Probable C-&gt;U-editing enzyme APOBEC-2 (APOBEC2).